Reading from the N-terminus, the 543-residue chain is Rop guanine nucleotide exchange factor 11 (543 aa).

Positions 61–89 (QPGKCGSVDRPSLPIGGVTPNRNDKLPRV) are disordered. The region spanning 95–456 (MEALIILQAA…QLTQEPTNNA (362 aa)) is the PRONE domain.

Interacts with ARAC4/ROP2, ARAC3/ROP, ARAC9/ROP8, PHYA and PHYB. Highly expressed in elongating regions of roots and pollen grains. Expressed in flowers, and at lower levels in leaves and stems.

The protein localises to the cytoplasm. In terms of biological role, guanine-nucleotide exchange factor (GEF) that acts as an activator of Rop (Rho of plants) GTPases by promoting the exchange of GDP for GTP. Functions as a light-signaling switch that functions in root growth and development through the activation of Rop in a phytochrome-dependent manner. May act as a negative regulator of phytochrome-mediated primary root development. This is Rop guanine nucleotide exchange factor 11 (ROPGEF11) from Arabidopsis thaliana (Mouse-ear cress).